We begin with the raw amino-acid sequence, 282 residues long: Pantothenate synthetase (282 aa).

30 to 37 (MGYLHEGH) contacts ATP. H37 functions as the Proton donor in the catalytic mechanism. Q61 provides a ligand contact to (R)-pantoate. Beta-alanine is bound at residue Q61. 147 to 150 (GMKD) serves as a coordination point for ATP. Residue Q153 coordinates (R)-pantoate. ATP contacts are provided by residues V176 and 184 to 187 (KSSR).

The protein belongs to the pantothenate synthetase family. In terms of assembly, homodimer.

Its subcellular location is the cytoplasm. It carries out the reaction (R)-pantoate + beta-alanine + ATP = (R)-pantothenate + AMP + diphosphate + H(+). Its pathway is cofactor biosynthesis; (R)-pantothenate biosynthesis; (R)-pantothenate from (R)-pantoate and beta-alanine: step 1/1. Functionally, catalyzes the condensation of pantoate with beta-alanine in an ATP-dependent reaction via a pantoyl-adenylate intermediate. This Bacillus thuringiensis (strain Al Hakam) protein is Pantothenate synthetase.